We begin with the raw amino-acid sequence, 238 residues long: Probable transcriptional regulatory protein YeeN (238 aa).

This sequence belongs to the TACO1 family. YeeN subfamily.

The protein resides in the cytoplasm. The polypeptide is Probable transcriptional regulatory protein YeeN (Escherichia coli O157:H7).